We begin with the raw amino-acid sequence, 342 residues long: MVQASGHRRSTRGSKMVSWSVIAKIQEILQRKMVREFLAEFMSTYVMMVFGLGSVAHMVLNKKYGSYLGVNLGFGFGVTMGVHVAGRISGAHMNAAVTFANCALGRVPWRKFPVYVLGQFLGSFLAAATIYSLFYTAILHFSGGQLMVTGPVATAGIFATYLPDHMTLWRGFLNEAWLTGMLQLCLFAITDQENNPALPGTEALVIGILVVIIGVSLGMNTGYAINPSRDLPPRIFTFIAGWGKQVFSNGENWWWVPVVAPLLGAYLGGIIYLVFIGSTIPREPLKLEDSVAYEDHGITVLPKMGSHEPTISPLTPVSVSPANRSSVHPAPPLHESMALEHF.

The Cytoplasmic segment spans residues Met1 to Glu36. Ser20 carries the post-translational modification Phosphoserine. Residues Phe37 to Ser54 form a helical membrane-spanning segment. The Extracellular segment spans residues Val55–Tyr67. The chain crosses the membrane as a helical span at residues Leu68–Ala85. Topologically, residues Gly86 to Ser89 are cytoplasmic. Residues Gly90–Ala103 constitute an intramembrane region (discontinuously helical). The NPA 1 motif lies at Asn94–Ala96. Residues Leu104–Lys111 lie on the Cytoplasmic side of the membrane. Residues Phe112–Ser132 form a helical membrane-spanning segment. Topologically, residues Leu133–Arg170 are extracellular. The helical transmembrane segment at Gly171–Ala188 threads the bilayer. The Cytoplasmic portion of the chain corresponds to Ile189–Gly200. Residues Thr201–Leu217 traverse the membrane as a helical segment. Residues Gly218–Thr221 lie on the Extracellular side of the membrane. An intramembrane region (discontinuously helical) is located at residues Gly222–Ile235. Positions Asn226–Ser228 match the NPA 2 motif. Residues Phe236 to Trp253 are Extracellular-facing. The helical transmembrane segment at Trp254–Phe275 threads the bilayer. The Cytoplasmic portion of the chain corresponds to Ile276–Phe342.

The protein belongs to the MIP/aquaporin (TC 1.A.8) family. Homotetramer; each monomer provides an independent glycerol/water pore. Two homotetramers on opposing membranes can dimerize, forming a cell-cell junction. Interacts with PLIN1. Phosphorylation by PKA could prevent the interaction with PLIN1. In terms of tissue distribution, detected in the sperm head (at protein level). Detected in white adipose tissue.

It localises to the cell membrane. Its subcellular location is the cytoplasmic vesicle membrane. The protein localises to the lipid droplet. The catalysed reaction is glycerol(in) = glycerol(out). It carries out the reaction H2O(in) = H2O(out). It catalyses the reaction urea(in) = urea(out). Glycerol transport is regulated by pH, with the porin being permeable to glycerol at pH 7.4 but not at pH 5.5. Water permeability, however, is not influenced by pH. Inhibited by mercury ions. Functionally, aquaglyceroporins form homotetrameric transmembrane channels, with each monomer independently mediating glycerol and water transport across the plasma membrane along their osmotic gradient. Could also be permeable to urea. Mediates the efflux of glycerol, formed upon triglyceride hydrolysis, to avoid its accumulation in adipocytes and to make it available to other tissues. In the kidney, mediates the reabsorption of glycerol, preventing its loss in urine, again participating to energy homeostasis. In pancreatic beta cells, it also mediates the efflux of glycerol, regulating its intracellular levels. This Homo sapiens (Human) protein is Aquaporin-7.